Reading from the N-terminus, the 150-residue chain is Large ribosomal subunit protein bL9 (150 aa).

The protein belongs to the bacterial ribosomal protein bL9 family.

Binds to the 23S rRNA. The sequence is that of Large ribosomal subunit protein bL9 from Shewanella putrefaciens (strain CN-32 / ATCC BAA-453).